The sequence spans 530 residues: Glutamate--cysteine ligase (530 aa).

This sequence belongs to the glutamate--cysteine ligase type 1 family. Type 1 subfamily.

The enzyme catalyses L-cysteine + L-glutamate + ATP = gamma-L-glutamyl-L-cysteine + ADP + phosphate + H(+). It functions in the pathway sulfur metabolism; glutathione biosynthesis; glutathione from L-cysteine and L-glutamate: step 1/2. The sequence is that of Glutamate--cysteine ligase from Pseudomonas entomophila (strain L48).